Here is a 352-residue protein sequence, read N- to C-terminus: Quinolinate synthase (352 aa).

Iminosuccinate is bound by residues H48 and S69. Position 114 (C114) interacts with [4Fe-4S] cluster. Residues 140-142 (YAN) and S157 each bind iminosuccinate. Residue C201 coordinates [4Fe-4S] cluster. Iminosuccinate is bound by residues 227–229 (HPE) and T244. C298 contacts [4Fe-4S] cluster.

The protein belongs to the quinolinate synthase family. Type 1 subfamily. [4Fe-4S] cluster is required as a cofactor.

The protein resides in the cytoplasm. It carries out the reaction iminosuccinate + dihydroxyacetone phosphate = quinolinate + phosphate + 2 H2O + H(+). The protein operates within cofactor biosynthesis; NAD(+) biosynthesis; quinolinate from iminoaspartate: step 1/1. Functionally, catalyzes the condensation of iminoaspartate with dihydroxyacetone phosphate to form quinolinate. The chain is Quinolinate synthase from Pseudomonas syringae pv. syringae (strain B728a).